The sequence spans 213 residues: Large ribosomal subunit protein uL3 (213 aa).

The interval 135-155 (THGSKNHRLPGSTGAGTTPGR) is disordered.

It belongs to the universal ribosomal protein uL3 family. Part of the 50S ribosomal subunit. Forms a cluster with proteins L14 and L19.

In terms of biological role, one of the primary rRNA binding proteins, it binds directly near the 3'-end of the 23S rRNA, where it nucleates assembly of the 50S subunit. In Synechocystis sp. (strain ATCC 27184 / PCC 6803 / Kazusa), this protein is Large ribosomal subunit protein uL3.